A 509-amino-acid chain; its full sequence is Activin receptor type-1 (509 aa).

An N-terminal signal peptide occupies residues 1–20; sequence MVDGVMILPVLMMMAFPSPS. Residues 21–123 are Extracellular-facing; sequence VEDEKPKVNQ…FPGTQNFHLE (103 aa). Asn-102 is a glycosylation site (N-linked (GlcNAc...) asparagine). A helical membrane pass occupies residues 124 to 146; sequence VGLIILSVVFAVCLLACILGVAL. At 147–509 the chain is on the cytoplasmic side; sequence RKFKRRNQER…NSLDKLKTDC (363 aa). The GS domain occupies 178–207; that stretch reads STLAELLDHSCTSGSGSGLPFLVQRTVARQ. Residues 208-502 form the Protein kinase domain; the sequence is ITLLECVGKG…KTLTKIDNSL (295 aa). ATP contacts are provided by residues 214-222 and Lys-235; that span reads VGKGRYGEV. The active-site Proton acceptor is Asp-336. At Ser-501 the chain carries Phosphoserine.

The protein belongs to the protein kinase superfamily. TKL Ser/Thr protein kinase family. TGFB receptor subfamily. In terms of assembly, interacts with FKBP1A. Interacts with FCHO1. Interacts with CLU. Interacts with type II receptors AMHR2 and ACVR2A. Interacts with BMP7. Interacts with BMP9. Interacts with BMP6 (when glycosylated); the interaction may induce HAMP expression. Interacts with TSC22D1/TSC-22. Mg(2+) is required as a cofactor. Requires Mn(2+) as cofactor. Highly expressed in bone during developmental stages. Expressed in normal parenchymal cells, endothelial cells, fibroblasts and tumor-derived epithelial cells.

It localises to the membrane. It catalyses the reaction L-threonyl-[receptor-protein] + ATP = O-phospho-L-threonyl-[receptor-protein] + ADP + H(+). It carries out the reaction L-seryl-[receptor-protein] + ATP = O-phospho-L-seryl-[receptor-protein] + ADP + H(+). Its function is as follows. Bone morphogenetic protein (BMP) type I receptor that is involved in a wide variety of biological processes, including bone, heart, cartilage, nervous, and reproductive system development and regulation. As a type I receptor, forms heterotetrameric receptor complexes with the type II receptors AMHR2, ACVR2A ors ACVR2B. Upon binding of ligands such as BMP7 or BMP9 to the heteromeric complexes, type II receptors transphosphorylate ACVR1 intracellular domain. In turn, ACVR1 kinase domain is activated and subsequently phosphorylates SMAD1/5/8 proteins that transduce the signal. In addition to its role in mediating BMP pathway-specific signaling, suppresses TGFbeta/activin pathway signaling by interfering with the binding of activin to its type II receptor. Besides canonical SMAD signaling, can activate non-canonical pathways such as p38 mitogen-activated protein kinases/MAPKs. May promote the expression of HAMP, potentially via its interaction with BMP6. This is Activin receptor type-1 (Acvr1) from Mus musculus (Mouse).